A 489-amino-acid chain; its full sequence is Glucose-6-phosphate isomerase (489 aa).

Residue E309 is the Proton donor of the active site. Catalysis depends on residues H340 and K459.

Belongs to the GPI family.

The protein localises to the cytoplasm. The catalysed reaction is alpha-D-glucose 6-phosphate = beta-D-fructose 6-phosphate. It functions in the pathway carbohydrate biosynthesis; gluconeogenesis. It participates in carbohydrate degradation; glycolysis; D-glyceraldehyde 3-phosphate and glycerone phosphate from D-glucose: step 2/4. In terms of biological role, catalyzes the reversible isomerization of glucose-6-phosphate to fructose-6-phosphate. This chain is Glucose-6-phosphate isomerase, found in Idiomarina loihiensis (strain ATCC BAA-735 / DSM 15497 / L2-TR).